The primary structure comprises 361 residues: Methylthioribose-1-phosphate isomerase (361 aa).

Catalysis depends on Asp245, which acts as the Proton donor.

This sequence belongs to the eIF-2B alpha/beta/delta subunits family. MtnA subfamily.

The protein localises to the cytoplasm. It localises to the nucleus. The catalysed reaction is 5-(methylsulfanyl)-alpha-D-ribose 1-phosphate = 5-(methylsulfanyl)-D-ribulose 1-phosphate. Its pathway is amino-acid biosynthesis; L-methionine biosynthesis via salvage pathway; L-methionine from S-methyl-5-thio-alpha-D-ribose 1-phosphate: step 1/6. Functionally, catalyzes the interconversion of methylthioribose-1-phosphate (MTR-1-P) into methylthioribulose-1-phosphate (MTRu-1-P). This is Methylthioribose-1-phosphate isomerase from Monosiga brevicollis (Choanoflagellate).